A 286-amino-acid polypeptide reads, in one-letter code: ATP synthase gamma chain (286 aa).

It belongs to the ATPase gamma chain family. F-type ATPases have 2 components, CF(1) - the catalytic core - and CF(0) - the membrane proton channel. CF(1) has five subunits: alpha(3), beta(3), gamma(1), delta(1), epsilon(1). CF(0) has three main subunits: a, b and c.

The protein localises to the cell inner membrane. In terms of biological role, produces ATP from ADP in the presence of a proton gradient across the membrane. The gamma chain is believed to be important in regulating ATPase activity and the flow of protons through the CF(0) complex. This chain is ATP synthase gamma chain, found in Shewanella woodyi (strain ATCC 51908 / MS32).